A 433-amino-acid chain; its full sequence is Inositol hexakisphosphate kinase 1 (433 aa).

The disordered stretch occupies residues 100 to 160 (ETVEQDDTPE…SPKVELHSHS (61 aa)). Basic residues predominate over residues 113–123 (PRRKHSRRSLH). The span at 139-149 (SFETSESSQET) shows a compositional bias: polar residues. The segment covering 150-160 (KSPKVELHSHS) has biased composition (basic and acidic residues). Position 151 is a phosphoserine (Ser151). Residue 220-228 (PCVLDLKMG) coordinates substrate. The tract at residues 362–383 (PLCGPSTSPSNTSLEAGPSSPP) is disordered. The segment covering 366 to 375 (PSTSPSNTSL) has biased composition (polar residues).

It belongs to the inositol phosphokinase (IPK) family.

Its subcellular location is the cytoplasm. It localises to the nucleus. It carries out the reaction 1D-myo-inositol hexakisphosphate + ATP = 5-diphospho-1D-myo-inositol 1,2,3,4,6-pentakisphosphate + ADP. The enzyme catalyses 1-diphospho-1D-myo-inositol 2,3,4,5,6-pentakisphosphate + ATP + H(+) = 1,5-bis(diphospho)-1D-myo-inositol 2,3,4,6-tetrakisphosphate + ADP. In terms of biological role, converts inositol hexakisphosphate (InsP6) to diphosphoinositol pentakisphosphate (InsP7/PP-InsP5). Converts 1,3,4,5,6-pentakisphosphate (InsP5) to PP-InsP4. The polypeptide is Inositol hexakisphosphate kinase 1 (Ip6k1) (Rattus norvegicus (Rat)).